A 1346-amino-acid polypeptide reads, in one-letter code: DNA-directed RNA polymerase subunit beta (1346 aa).

Belongs to the RNA polymerase beta chain family. The RNAP catalytic core consists of 2 alpha, 1 beta, 1 beta' and 1 omega subunit. When a sigma factor is associated with the core the holoenzyme is formed, which can initiate transcription.

It catalyses the reaction RNA(n) + a ribonucleoside 5'-triphosphate = RNA(n+1) + diphosphate. DNA-dependent RNA polymerase catalyzes the transcription of DNA into RNA using the four ribonucleoside triphosphates as substrates. In Psychromonas ingrahamii (strain DSM 17664 / CCUG 51855 / 37), this protein is DNA-directed RNA polymerase subunit beta.